The following is a 266-amino-acid chain: Undecaprenyl-diphosphatase (266 aa).

Transmembrane regions (helical) follow at residues 4–24 (LATI…PVSS), 41–61 (GSAA…LVAY), 79–99 (AVAF…VGAV), 108–128 (LESP…ILAI), 143–163 (MPLR…IPGV), 184–204 (AEFS…YSLW), 220–240 (IGLF…VAIV), and 243–263 (FGFA…LLWL).

Belongs to the UppP family.

Its subcellular location is the cell inner membrane. The catalysed reaction is di-trans,octa-cis-undecaprenyl diphosphate + H2O = di-trans,octa-cis-undecaprenyl phosphate + phosphate + H(+). Catalyzes the dephosphorylation of undecaprenyl diphosphate (UPP). Confers resistance to bacitracin. This is Undecaprenyl-diphosphatase from Sphingopyxis alaskensis (strain DSM 13593 / LMG 18877 / RB2256) (Sphingomonas alaskensis).